Here is a 98-residue protein sequence, read N- to C-terminus: MPSISTNIILAFITALLGMLIFRSHLMSSLLCLEGMMLSMFILSTLTILNLYFTTSFMMPILLLVFAACEAAVGLALLVTVSNTYGLDYIQNLNLLQC.

Transmembrane regions (helical) follow at residues 2 to 22 (PSIS…MLIF), 29 to 49 (SLLC…LTIL), and 61 to 81 (ILLL…LVTV).

Belongs to the complex I subunit 4L family. In terms of assembly, core subunit of respiratory chain NADH dehydrogenase (Complex I) which is composed of 45 different subunits.

Its subcellular location is the mitochondrion inner membrane. The catalysed reaction is a ubiquinone + NADH + 5 H(+)(in) = a ubiquinol + NAD(+) + 4 H(+)(out). Core subunit of the mitochondrial membrane respiratory chain NADH dehydrogenase (Complex I) which catalyzes electron transfer from NADH through the respiratory chain, using ubiquinone as an electron acceptor. Part of the enzyme membrane arm which is embedded in the lipid bilayer and involved in proton translocation. This is NADH-ubiquinone oxidoreductase chain 4L (MT-ND4L) from Eulemur coronatus (Crowned lemur).